A 225-amino-acid chain; its full sequence is Proteoglycan 3 (225 aa).

A signal peptide spans M1–A17. The C-type lectin domain maps to C107–S224. 2 disulfides stabilise this stretch: C128-C223 and C200-C215.

In terms of tissue distribution, expressed in bone marrow. Not detected in placenta.

The protein localises to the cytoplasmic granule. Possesses similar cytotoxic and cytostimulatory activities to PRG2/MBP. In vitro, stimulates neutrophil superoxide production and IL8 release, and histamine and leukotriene C4 release from basophils. This is Proteoglycan 3 from Homo sapiens (Human).